Reading from the N-terminus, the 579-residue chain is Probable pectinesterase/pectinesterase inhibitor 7 (579 aa).

Residues 1–20 (MESPIFILITLSFFLQSVLA) form the signal peptide. Residues 22 to 185 (SQTLSNSSTI…TKLLGVSLAL (164 aa)) are pectinesterase inhibitor 7. N-linked (GlcNAc...) asparagine glycans are attached at residues Asn27, Asn115, Asn174, Asn274, Asn277, Asn287, Asn326, and Asn333. The pectinesterase 7 stretch occupies residues 265 to 564 (VTVSQDGTGN…TVTGLFIEAD (300 aa)). Residue Thr342 coordinates substrate. Asn359 carries N-linked (GlcNAc...) asparagine glycosylation. Substrate is bound at residue Gln372. Catalysis depends on Asp395, which acts as the Proton donor; for pectinesterase activity. A disulfide bridge connects residues Cys409 and Cys429. Asp416 (nucleophile; for pectinesterase activity) is an active-site residue. 2 N-linked (GlcNAc...) asparagine glycosylation sites follow: Asn462 and Asn475. Residues Arg484 and Trp486 each contribute to the substrate site. Residues Asn526, Asn533, Asn547, and Asn553 are each glycosylated (N-linked (GlcNAc...) asparagine).

The protein in the N-terminal section; belongs to the PMEI family. This sequence in the C-terminal section; belongs to the pectinesterase family. As to expression, expressed in siliques.

The protein resides in the secreted. It localises to the cell wall. It carries out the reaction [(1-&gt;4)-alpha-D-galacturonosyl methyl ester](n) + n H2O = [(1-&gt;4)-alpha-D-galacturonosyl](n) + n methanol + n H(+). It participates in glycan metabolism; pectin degradation; 2-dehydro-3-deoxy-D-gluconate from pectin: step 1/5. Acts in the modification of cell walls via demethylesterification of cell wall pectin. This Arabidopsis thaliana (Mouse-ear cress) protein is Probable pectinesterase/pectinesterase inhibitor 7 (PME7).